The primary structure comprises 800 residues: Cation/H(+) antiporter 9 (800 aa).

12 consecutive transmembrane segments (helical) span residues 43 to 63 (VIFG…FVCI), 73 to 93 (IGIP…PQLL), 110 to 130 (NVAL…LMGV), 145 to 165 (IVIA…FRNF), 186 to 206 (VIVS…VYEL), 216 to 236 (IAIS…VCIS), 247 to 267 (GIAN…LFIF), 287 to 306 (VYLY…LSVF), 338 to 358 (LVTN…ADVV), 371 to 391 (ILLL…PCLI), 401 to 421 (VIIA…FDVA), and 430 to 450 (ATYT…PTII).

It belongs to the monovalent cation:proton antiporter 2 (CPA2) transporter (TC 2.A.37) family. CHX (TC 2.A.37.4) subfamily.

The protein localises to the membrane. Its function is as follows. May operate as a cation/H(+) antiporter. The chain is Cation/H(+) antiporter 9 (CHX9) from Arabidopsis thaliana (Mouse-ear cress).